The following is a 206-amino-acid chain: Probable 5-formyltetrahydrofolate cyclo-ligase (206 aa).

Residues 8 to 12 and R12 contribute to the ATP site; that span reads KSELR. Substrate-binding positions include V54, E59, and 146-150; that span reads HGKGY. 143–151 is a binding site for ATP; sequence RCGHGKGYY. Mg(2+)-binding residues include D152 and D188.

Belongs to the 5-formyltetrahydrofolate cyclo-ligase family. In terms of assembly, monomer. The cofactor is Mg(2+).

It is found in the cytoplasm. It catalyses the reaction (6S)-5-formyl-5,6,7,8-tetrahydrofolate + ATP = (6R)-5,10-methenyltetrahydrofolate + ADP + phosphate. Contributes to tetrahydrofolate metabolism. Helps regulate carbon flow through the folate-dependent one-carbon metabolic network that supplies carbon for the biosynthesis of purines, thymidine and amino acids. Catalyzes the irreversible conversion of 5-formyltetrahydrofolate (5-CHO-H(4)PteGlu) to yield 5,10-methenyltetrahydrofolate. The chain is Probable 5-formyltetrahydrofolate cyclo-ligase from Caenorhabditis elegans.